The sequence spans 545 residues: Cytochrome P450 10 (545 aa).

Position 493 (Cys493) interacts with heme.

This sequence belongs to the cytochrome P450 family. The cofactor is heme. Abundantly expressed in the female gonadotropic hormone producing dorsal bodies.

Functionally, may be involved in the synthesis of the female gonadotropic hormone produced by the dorsal bodies. The chain is Cytochrome P450 10 (CYP10) from Lymnaea stagnalis (Great pond snail).